Here is a 554-residue protein sequence, read N- to C-terminus: Wee1-like protein kinase 2-B (554 aa).

2 disordered regions span residues 1–86 (MRMA…GGEC) and 145–182 (TLVNVNPFTPQSYRQTHFQPNGKRKERPEDDCSSDSQM). Ser-38 carries the post-translational modification Phosphoserine. Polar residues-rich tracts occupy residues 38–48 (SPVSSWRTNNC) and 147–163 (VNVNPFTPQSYRQTHFQ). The Protein kinase domain maps to 213 to 487 (FLEIEKIGAG…AKNSVLRRCV (275 aa)). ATP is bound by residues 219–227 (IGAGEFGSV) and Lys-242. The active-site Proton acceptor is the Asp-340. Mg(2+) contacts are provided by Asn-345 and Asp-377. Residues 490-516 (AAELQKQLNVEKFKTAMLERELQAAKL) adopt a coiled-coil conformation.

The protein belongs to the protein kinase superfamily. Ser/Thr protein kinase family. WEE1 subfamily. In terms of assembly, interacts with cdca3. In terms of processing, ubiquitinated and degraded at the onset of G2/M phase. Post-translationally, phosphorylated during M and G1 phases. Interacts with cdca3 when phosphorylated at Ser-38.

It localises to the nucleus. It carries out the reaction L-tyrosyl-[protein] + ATP = O-phospho-L-tyrosyl-[protein] + ADP + H(+). Functionally, oocyte and early embryo-specific protein tyrosine kinase that phosphorylates and inhibits cdk1 and acts as a regulator of meiosis in oocytes. Required to ensure the meiotic cell cycle in oocytes by phosphorylating cdk1 at 'Tyr-15', leading to inhibit cdk1 activity and prevent meiosis. The chain is Wee1-like protein kinase 2-B (wee2-b) from Xenopus laevis (African clawed frog).